A 302-amino-acid chain; its full sequence is Protoheme IX farnesyltransferase (302 aa).

Helical transmembrane passes span 24 to 44 (VVSL…FSGY), 48 to 68 (FFSV…AGAL), 97 to 117 (AALV…ELAV), 120 to 140 (LSAV…TVYL), 147 to 167 (NIVV…AAVA), 174 to 194 (SLVL…ALAL), 221 to 241 (ILCY…LRFS), 245 to 265 (YMIV…NVYL), and 282 to 302 (FLLF…GMLI).

This sequence belongs to the UbiA prenyltransferase family. Protoheme IX farnesyltransferase subfamily.

It is found in the cell inner membrane. It catalyses the reaction heme b + (2E,6E)-farnesyl diphosphate + H2O = Fe(II)-heme o + diphosphate. It participates in porphyrin-containing compound metabolism; heme O biosynthesis; heme O from protoheme: step 1/1. Its function is as follows. Converts heme B (protoheme IX) to heme O by substitution of the vinyl group on carbon 2 of heme B porphyrin ring with a hydroxyethyl farnesyl side group. This is Protoheme IX farnesyltransferase from Neorickettsia sennetsu (strain ATCC VR-367 / Miyayama) (Ehrlichia sennetsu).